Here is a 236-residue protein sequence, read N- to C-terminus: 5'-methylthioadenosine/S-adenosylhomocysteine nucleosidase (236 aa).

Glu-12 (proton acceptor) is an active-site residue. Substrate contacts are provided by residues Gly-78, Ile-153, and 174 to 175 (ME). The Proton donor role is filled by Asp-198.

It belongs to the PNP/UDP phosphorylase family. MtnN subfamily.

It catalyses the reaction S-adenosyl-L-homocysteine + H2O = S-(5-deoxy-D-ribos-5-yl)-L-homocysteine + adenine. The enzyme catalyses S-methyl-5'-thioadenosine + H2O = 5-(methylsulfanyl)-D-ribose + adenine. The catalysed reaction is 5'-deoxyadenosine + H2O = 5-deoxy-D-ribose + adenine. It functions in the pathway amino-acid biosynthesis; L-methionine biosynthesis via salvage pathway; S-methyl-5-thio-alpha-D-ribose 1-phosphate from S-methyl-5'-thioadenosine (hydrolase route): step 1/2. Catalyzes the irreversible cleavage of the glycosidic bond in both 5'-methylthioadenosine (MTA) and S-adenosylhomocysteine (SAH/AdoHcy) to adenine and the corresponding thioribose, 5'-methylthioribose and S-ribosylhomocysteine, respectively. Also cleaves 5'-deoxyadenosine, a toxic by-product of radical S-adenosylmethionine (SAM) enzymes, into 5-deoxyribose and adenine. This Shewanella baltica (strain OS223) protein is 5'-methylthioadenosine/S-adenosylhomocysteine nucleosidase.